A 94-amino-acid polypeptide reads, in one-letter code: AFELTQTPSSVEAAVGGTVTINCQASTDISSNLAWYTPKPGSPPKLLIYSASTLASGVSSRFKGSGSGVLITLTISDLECGVSFGGGTKVVVEV.

The framework-1 stretch occupies residues Ala-1 to Cys-23. Residues Gln-24–Ala-34 form a complementarity-determining-1 region. The interval Trp-35–Tyr-49 is framework-2. Positions Ser-50–Ser-56 are complementarity-determining-2. The interval Gly-57 to Val-82 is framework-3. A region of interest (complementarity-determining-3) is located at residue Ser-83. The tract at residues Phe-84 to Glu-93 is framework-4.

In Oryctolagus cuniculus (Rabbit), this protein is Ig kappa-B5 chain V region 2699.